Reading from the N-terminus, the 254-residue chain is PF03932 family protein CutC (254 aa).

Belongs to the CutC family.

It localises to the cytoplasm. This chain is PF03932 family protein CutC, found in Yersinia pestis bv. Antiqua (strain Antiqua).